A 312-amino-acid chain; its full sequence is Holliday junction branch migration complex subunit RuvB (312 aa).

Residues 1–168 (MKTNYEFRPQ…FGHIFHLNEY (168 aa)) form a large ATPase domain (RuvB-L) region. Residues Arg8, Gly49, Lys52, Thr53, Thr54, 115 to 117 (EDF), Arg158, Tyr168, and Arg206 contribute to the ATP site. Position 53 (Thr53) interacts with Mg(2+). Positions 169 to 234 (EPSEISAIIL…DIKNIFKKIQ (66 aa)) are small ATPAse domain (RuvB-S). The head domain (RuvB-H) stretch occupies residues 237-312 (EFGLDEQDIN…DFLKNNQLIK (76 aa)). The DNA site is built by Lys290 and Arg295.

This sequence belongs to the RuvB family. Homohexamer. Forms an RuvA(8)-RuvB(12)-Holliday junction (HJ) complex. HJ DNA is sandwiched between 2 RuvA tetramers; dsDNA enters through RuvA and exits via RuvB. An RuvB hexamer assembles on each DNA strand where it exits the tetramer. Each RuvB hexamer is contacted by two RuvA subunits (via domain III) on 2 adjacent RuvB subunits; this complex drives branch migration. In the full resolvosome a probable DNA-RuvA(4)-RuvB(12)-RuvC(2) complex forms which resolves the HJ.

Its subcellular location is the cytoplasm. The enzyme catalyses ATP + H2O = ADP + phosphate + H(+). In terms of biological role, the RuvA-RuvB-RuvC complex processes Holliday junction (HJ) DNA during genetic recombination and DNA repair, while the RuvA-RuvB complex plays an important role in the rescue of blocked DNA replication forks via replication fork reversal (RFR). RuvA specifically binds to HJ cruciform DNA, conferring on it an open structure. The RuvB hexamer acts as an ATP-dependent pump, pulling dsDNA into and through the RuvAB complex. RuvB forms 2 homohexamers on either side of HJ DNA bound by 1 or 2 RuvA tetramers; 4 subunits per hexamer contact DNA at a time. Coordinated motions by a converter formed by DNA-disengaged RuvB subunits stimulates ATP hydrolysis and nucleotide exchange. Immobilization of the converter enables RuvB to convert the ATP-contained energy into a lever motion, pulling 2 nucleotides of DNA out of the RuvA tetramer per ATP hydrolyzed, thus driving DNA branch migration. The RuvB motors rotate together with the DNA substrate, which together with the progressing nucleotide cycle form the mechanistic basis for DNA recombination by continuous HJ branch migration. Branch migration allows RuvC to scan DNA until it finds its consensus sequence, where it cleaves and resolves cruciform DNA. The polypeptide is Holliday junction branch migration complex subunit RuvB (Ureaplasma parvum serovar 3 (strain ATCC 27815 / 27 / NCTC 11736)).